Consider the following 68-residue polypeptide: DNA-directed RNA polymerase subunit Rpo10 (68 aa).

Zn(2+) contacts are provided by Cys7, Cys10, Cys44, and Cys45.

This sequence belongs to the archaeal Rpo10/eukaryotic RPB10 RNA polymerase subunit family. As to quaternary structure, part of the RNA polymerase complex. Zn(2+) serves as cofactor.

It is found in the cytoplasm. The catalysed reaction is RNA(n) + a ribonucleoside 5'-triphosphate = RNA(n+1) + diphosphate. DNA-dependent RNA polymerase (RNAP) catalyzes the transcription of DNA into RNA using the four ribonucleoside triphosphates as substrates. The sequence is that of DNA-directed RNA polymerase subunit Rpo10 from Methanococcus maripaludis (strain C7 / ATCC BAA-1331).